The following is a 307-amino-acid chain: Ribosomal RNA small subunit methyltransferase H (307 aa).

Residues Ala33–His35, Asp52, Leu83, Asp97, and Gln104 contribute to the S-adenosyl-L-methionine site.

The protein belongs to the methyltransferase superfamily. RsmH family.

It is found in the cytoplasm. The enzyme catalyses cytidine(1402) in 16S rRNA + S-adenosyl-L-methionine = N(4)-methylcytidine(1402) in 16S rRNA + S-adenosyl-L-homocysteine + H(+). Specifically methylates the N4 position of cytidine in position 1402 (C1402) of 16S rRNA. The polypeptide is Ribosomal RNA small subunit methyltransferase H (Sulfurovum sp. (strain NBC37-1)).